We begin with the raw amino-acid sequence, 197 residues long: Putative early 21.8 kDa protein (197 aa).

Functionally, this protein is required for viral late gene expression. The protein is Putative early 21.8 kDa protein (DA26) of Orgyia pseudotsugata (Douglas-fir tussock moth).